A 150-amino-acid polypeptide reads, in one-letter code: MAPKAEKKPAAKKPAEEEPAAEKAPAGKKPKAEKRVPAGKSAGKEGGEGKRGRKKGKKSVETYKIYIFKVLKQVHPDIGISSKAMSIMNSFINDIFEKLAAEAAKLARYNKKPTITSREIQTSVRLVLPGELAKHAVSEGTKAVTKFTSS.

Residues 1–16 (MAPKAEKKPAAKKPAE) are compositionally biased toward basic and acidic residues. A disordered region spans residues 1 to 57 (MAPKAEKKPAAKKPAEEEPAAEKAPAGKKPKAEKRVPAGKSAGKEGGEGKRGRKKGK). Residues lysine 7 and lysine 34 each carry the N6-acetyllysine modification. Lysine 146 is covalently cross-linked (Glycyl lysine isopeptide (Lys-Gly) (interchain with G-Cter in ubiquitin)).

It belongs to the histone H2B family. As to quaternary structure, the nucleosome is a histone octamer containing two molecules each of H2A, H2B, H3 and H4 assembled in one H3-H4 heterotetramer and two H2A-H2B heterodimers. The octamer wraps approximately 147 bp of DNA. Post-translationally, can be acetylated to form H2BK6ac and H2BK33ac. Monoubiquitinated to form H2BK143ub1; may give a specific tag for epigenetic transcriptional activation.

The protein localises to the nucleus. It is found in the chromosome. In terms of biological role, core component of nucleosome. Nucleosomes wrap and compact DNA into chromatin, limiting DNA accessibility to the cellular machineries which require DNA as a template. Histones thereby play a central role in transcription regulation, DNA repair, DNA replication and chromosomal stability. DNA accessibility is regulated via a complex set of post-translational modifications of histones, also called histone code, and nucleosome remodeling. The chain is Histone H2B.2 from Zea mays (Maize).